A 180-amino-acid polypeptide reads, in one-letter code: Large ribosomal subunit protein uL5 (180 aa).

This sequence belongs to the universal ribosomal protein uL5 family. Part of the 50S ribosomal subunit; part of the 5S rRNA/L5/L18/L25 subcomplex. Contacts the 5S rRNA and the P site tRNA. Forms a bridge to the 30S subunit in the 70S ribosome.

Its function is as follows. This is one of the proteins that bind and probably mediate the attachment of the 5S RNA into the large ribosomal subunit, where it forms part of the central protuberance. In the 70S ribosome it contacts protein S13 of the 30S subunit (bridge B1b), connecting the 2 subunits; this bridge is implicated in subunit movement. Contacts the P site tRNA; the 5S rRNA and some of its associated proteins might help stabilize positioning of ribosome-bound tRNAs. The chain is Large ribosomal subunit protein uL5 from Ralstonia nicotianae (strain ATCC BAA-1114 / GMI1000) (Ralstonia solanacearum).